The following is a 134-amino-acid chain: Proline-rich protein 4 (134 aa).

Residues 1 to 16 (MLLVLLSVVLLALSSA) form the signal peptide. Residues 28-134 (FTFTIPDVED…ARHPQEQPLW (107 aa)) form a disordered region. Over residues 47–59 (QRPPPEGLLPRPP) the composition is skewed to pro residues. Residues 110 to 119 (VSLQEASSFF) are compositionally biased toward polar residues. A compositionally biased stretch (basic and acidic residues) spans 120–134 (QRDRPARHPQEQPLW).

As to expression, abundantly expressed in lacrimal gland where it is found in the acinar cells but not in the intralobular ducts. Also found in the submandibular gland, the parotid and sublingual glands.

The protein resides in the secreted. In Homo sapiens (Human), this protein is Proline-rich protein 4 (PRR4).